A 237-amino-acid chain; its full sequence is Small ribosomal subunit protein uS3 (237 aa).

Residues 39-107 enclose the KH type-2 domain; that stretch reads VRQFLTKELK…PAQINISEVR (69 aa).

It belongs to the universal ribosomal protein uS3 family. Part of the 30S ribosomal subunit. Forms a tight complex with proteins S10 and S14.

Binds the lower part of the 30S subunit head. Binds mRNA in the 70S ribosome, positioning it for translation. In Aeromonas hydrophila subsp. hydrophila (strain ATCC 7966 / DSM 30187 / BCRC 13018 / CCUG 14551 / JCM 1027 / KCTC 2358 / NCIMB 9240 / NCTC 8049), this protein is Small ribosomal subunit protein uS3.